A 272-amino-acid polypeptide reads, in one-letter code: Cytochrome b-c1 complex subunit Rieske, mitochondrial (272 aa).

The Mitochondrial matrix portion of the chain corresponds to 77–104; sequence VHNDVTVPDFSAYRREDVMDATTSSQTS. A helical transmembrane segment spans residues 105–138; sequence SEDRKGFSYLVTATACVATAYAAKNVVTQFISSL. Residues 139–272 are Mitochondrial intermembrane-facing; the sequence is SASADVLALS…FVGDDLVVVG (134 aa). Positions 185 to 270 constitute a Rieske domain; the sequence is EAEVDVSKLR…YQFVGDDLVV (86 aa). 6 residues coordinate [2Fe-2S] cluster: Cys-215, His-217, Leu-218, Cys-234, His-237, and Ser-239. Cys-220 and Cys-236 are oxidised to a cystine.

The protein belongs to the Rieske iron-sulfur protein family. Component of the ubiquinol-cytochrome c oxidoreductase (cytochrome b-c1 complex, complex III, CIII), a multisubunit enzyme composed of 11 subunits. The complex is composed of 3 respiratory subunits cytochrome b, cytochrome c1 and Rieske protein UQCRFS1, 2 core protein subunits UQCRC1/QCR1 and UQCRC2/QCR2, and 6 low-molecular weight protein subunits UQCRH/QCR6, UQCRB/QCR7, UQCRQ/QCR8, UQCR10/QCR9, UQCR11/QCR10 and subunit 9, the cleavage product of Rieske protein UQCRFS1. The complex exists as an obligatory dimer and forms supercomplexes (SCs) in the inner mitochondrial membrane with NADH-ubiquinone oxidoreductase (complex I, CI) and cytochrome c oxidase (complex IV, CIV), resulting in different assemblies (supercomplex SCI(1)III(2)IV(1) and megacomplex MCI(2)III(2)IV(2)). Incorporation of the Rieske protein UQCRFS1 is the penultimate step in complex III assembly. Interacts with TTC19, which is involved in the clearance of UQCRFS1 fragments. In terms of assembly, component of the ubiquinol-cytochrome c oxidoreductase (cytochrome b-c1 complex, complex III, CIII). Subunit 9 corresponds to the mitochondrial targeting sequence (MTS) of Rieske protein UQCRFS1. It is retained after processing and incorporated inside complex III, where it remains bound to the complex and localizes between the 2 core subunits UQCRC1/QCR1 and UQCRC2/QCR2. Requires [2Fe-2S] cluster as cofactor. Proteolytic processing is necessary for the correct insertion of UQCRFS1 in the complex III dimer. Several fragments are generated during UQCRFS1 insertion, most probably due to the endogenous matrix-processing peptidase (MPP) activity of the 2 core protein subunits UQCRC1/QCR1 and UQCRC2/QCR2, which are homologous to the 2 mitochondrial-processing peptidase (MPP) subunits beta-MPP and alpha-MPP respectively. The action of the protease is also necessary for the clearance of the UQCRFS1 fragments.

The protein resides in the mitochondrion inner membrane. It catalyses the reaction a quinol + 2 Fe(III)-[cytochrome c](out) = a quinone + 2 Fe(II)-[cytochrome c](out) + 2 H(+)(out). Component of the ubiquinol-cytochrome c oxidoreductase, a multisubunit transmembrane complex that is part of the mitochondrial electron transport chain which drives oxidative phosphorylation. The respiratory chain contains 3 multisubunit complexes succinate dehydrogenase (complex II, CII), ubiquinol-cytochrome c oxidoreductase (cytochrome b-c1 complex, complex III, CIII) and cytochrome c oxidase (complex IV, CIV), that cooperate to transfer electrons derived from NADH and succinate to molecular oxygen, creating an electrochemical gradient over the inner membrane that drives transmembrane transport and the ATP synthase. The cytochrome b-c1 complex catalyzes electron transfer from ubiquinol to cytochrome c, linking this redox reaction to translocation of protons across the mitochondrial inner membrane, with protons being carried across the membrane as hydrogens on the quinol. In the process called Q cycle, 2 protons are consumed from the matrix, 4 protons are released into the intermembrane space and 2 electrons are passed to cytochrome c. The Rieske protein is a catalytic core subunit containing a [2Fe-2S] iron-sulfur cluster. It cycles between 2 conformational states during catalysis to transfer electrons from the quinol bound in the Q(0) site in cytochrome b to cytochrome c1. Incorporation of UQCRFS1 is the penultimate step in complex III assembly. Its function is as follows. Component of the ubiquinol-cytochrome c oxidoreductase (cytochrome b-c1 complex, complex III, CIII). UQCRFS1 undergoes proteolytic processing once it is incorporated in the complex III dimer. One of the fragments, called subunit 9, corresponds to its mitochondrial targeting sequence (MTS). The proteolytic processing is necessary for the correct insertion of UQCRFS1 in the complex III dimer, but the persistence of UQCRFS1-derived fragments may prevent newly imported UQCRFS1 to be processed and assembled into complex III and is detrimental for the complex III structure and function. In Gallus gallus (Chicken), this protein is Cytochrome b-c1 complex subunit Rieske, mitochondrial (UQCRFS1).